The chain runs to 397 residues: Phosphoglycerate kinase (397 aa).

Substrate-binding positions include 22–24 (DYN), Arg-38, 61–64 (HLGR), Arg-119, and Arg-152. ATP is bound by residues Lys-203, Gly-294, Glu-325, and 351-354 (GGDT).

It belongs to the phosphoglycerate kinase family. As to quaternary structure, monomer.

The protein resides in the cytoplasm. The enzyme catalyses (2R)-3-phosphoglycerate + ATP = (2R)-3-phospho-glyceroyl phosphate + ADP. It participates in carbohydrate degradation; glycolysis; pyruvate from D-glyceraldehyde 3-phosphate: step 2/5. This Aquifex aeolicus (strain VF5) protein is Phosphoglycerate kinase (pgk).